The sequence spans 118 residues: Phospholipase A2 'basic' (118 aa).

7 disulfides stabilise this stretch: Cys11–Cys70, Cys26–Cys117, Cys28–Cys44, Cys43–Cys98, Cys50–Cys91, Cys59–Cys84, and Cys77–Cys89. The Ca(2+) site is built by Tyr27, Gly29, and Gly31. His47 is an active-site residue. A Ca(2+)-binding site is contributed by Asp48. A Coagulation factor Xa binding motif motif is present at residues 52 to 69 (EKAGKMGCWPYLTLYKYK). Asp92 is a catalytic residue.

It belongs to the phospholipase A2 family. Group I subfamily. D49 sub-subfamily. Requires Ca(2+) as cofactor. In terms of tissue distribution, expressed by the venom gland.

The protein resides in the secreted. The catalysed reaction is a 1,2-diacyl-sn-glycero-3-phosphocholine + H2O = a 1-acyl-sn-glycero-3-phosphocholine + a fatty acid + H(+). Snake venom phospholipase A2 (PLA2) that shows strong anticoagulant activity. Binds directly with the coagulation factor FXa (F10) and blocks the formation of the prothombinase complex. Acts by a nonenzymatic mechanism. Also inhibits the complex composed of tissue factor (F3) and coagulation factor VIIa (F7) (TF-VIIa complex) by both enzymatic and nonenzymatic mechanisms. PLA2 catalyzes the calcium-dependent hydrolysis of the 2-acyl groups in 3-sn-phosphoglycerides. The sequence is that of Phospholipase A2 'basic' from Naja nigricollis (Black-necked spitting cobra).